The sequence spans 507 residues: Dolichyl pyrophosphate Man9GlcNAc2 alpha-1,3-glucosyltransferase (507 aa).

The Cytoplasmic segment spans residues 1–3 (MEK). The helical transmembrane segment at 4 to 24 (WSLMTITVLLALTVRWTVSLG) threads the bilayer. Over 25-114 (SYSGAGKPPM…SQSHKLFMRT (90 aa)) the chain is Lumenal. The N-linked (GlcNAc...) asparagine glycan is linked to N59. Residues 115–135 (TVFVADLLIYIPAVILYCCSL) form a helical membrane-spanning segment. Over 136–143 (KETSTKKK) the chain is Cytoplasmic. A helical membrane pass occupies residues 144-164 (VSSALCILLYPGLILIDHGHF). Residues 165-168 (QYNS) are Lumenal-facing. A helical membrane pass occupies residues 169-189 (VSLGFALWGVLCLSYDWDLLG). At 190-226 (SAAFCLALNYKQMELYHSLPFFCYLLGKCFKKGLKGK) the chain is on the cytoplasmic side. The chain crosses the membrane as a helical span at residues 227-247 (GLLLLIKLAGTVVASFAVCWL). Residues 248 to 297 (PFCTDVEQIMQVLRRLFPIDRGLFEDKVANIWCSLSVLIKIKNVVSPQTQ) lie on the Lumenal side of the membrane. A helical membrane pass occupies residues 298–318 (LKLSFAVTFLSLLPTCIKLTV). The Cytoplasmic segment spans residues 319–338 (QPSLRGFKLTLVSCALSFFL). The chain crosses the membrane as a helical span at residues 339–359 (FSFQVHEKSILLVSVPVCLII). The Lumenal segment spans residues 360–361 (NE). A helical transmembrane segment spans residues 362–382 (VPFMATWFLLVSTFSMLPLLL). The Cytoplasmic segment spans residues 383–387 (KDGLL). A helical transmembrane segment spans residues 388–408 (LPYAVTTLAFLSACVASFAIF). Topologically, residues 409 to 441 (EKTSAKDLQLKPFSQSLRGYVSWFKLFPKIVRS) are lumenal. The chain crosses the membrane as a helical span at residues 442–462 (LFLLSVTLMGVLSVMSAAVHP). The Cytoplasmic segment spans residues 463 to 473 (PQRFPDLFPVS). Residues 474–494 (VSSISCLHFLFFLVYFNVIIL) form a helical membrane-spanning segment. At 495-507 (WDSKNSRNQKKVS) the chain is on the lumenal side.

It belongs to the ALG6/ALG8 glucosyltransferase family.

The protein resides in the endoplasmic reticulum membrane. The catalysed reaction is an alpha-D-Man-(1-&gt;2)-alpha-D-Man-(1-&gt;2)-alpha-D-Man-(1-&gt;3)-[alpha-D-Man-(1-&gt;2)-alpha-D-Man-(1-&gt;3)-[alpha-D-Man-(1-&gt;2)-alpha-D-Man-(1-&gt;6)]-alpha-D-Man-(1-&gt;6)]-beta-D-Man-(1-&gt;4)-beta-D-GlcNAc-(1-&gt;4)-alpha-D-GlcNAc-diphospho-di-trans,poly-cis-dolichol + a di-trans,poly-cis-dolichyl beta-D-glucosyl phosphate = an alpha-D-Glc-(1-&gt;3)-alpha-D-Man-(1-&gt;2)-alpha-D-Man-(1-&gt;2)-alpha-D-Man-(1-&gt;3)-[alpha-D-Man-(1-&gt;2)-alpha-D-Man-(1-&gt;3)-[alpha-D-Man-(1-&gt;2)-alpha-D-Man-(1-&gt;6)]-alpha-D-Man-(1-&gt;6)]-beta-D-Man-(1-&gt;4)-beta-D-GlcNAc-(1-&gt;4)-alpha-D-GlcNAc-diphospho-di-trans,poly-cis-dolichol + a di-trans,poly-cis-dolichyl phosphate + H(+). Its pathway is protein modification; protein glycosylation. Functionally, dolichyl pyrophosphate Man9GlcNAc2 alpha-1,3-glucosyltransferase that operates in the biosynthetic pathway of dolichol-linked oligosaccharides, the glycan precursors employed in protein asparagine (N)-glycosylation. The assembly of dolichol-linked oligosaccharides begins on the cytosolic side of the endoplasmic reticulum membrane and finishes in its lumen. The sequential addition of sugars to dolichol pyrophosphate produces dolichol-linked oligosaccharides containing fourteen sugars, including two GlcNAcs, nine mannoses and three glucoses. Once assembled, the oligosaccharide is transferred from the lipid to nascent proteins by oligosaccharyltransferases. In the lumen of the endoplasmic reticulum, adds the first glucose residue from dolichyl phosphate glucose (Dol-P-Glc) onto the lipid-linked oligosaccharide intermediate Man(9)GlcNAc(2)-PP-Dol to produce Glc(1)Man(9)GlcNAc(2)-PP-Dol. Glc(1)Man(9)GlcNAc(2)-PP-Dol is a substrate for ALG8, the following enzyme in the biosynthetic pathway. This chain is Dolichyl pyrophosphate Man9GlcNAc2 alpha-1,3-glucosyltransferase, found in Gallus gallus (Chicken).